Consider the following 199-residue polypeptide: Dephospho-CoA kinase (199 aa).

A DPCK domain is found at 2–199; sequence KIAVTGGYSS…FVADRIEKKK (198 aa). 10-15 contributes to the ATP binding site; it reads SSGKSS.

This sequence belongs to the CoaE family.

The protein resides in the cytoplasm. It carries out the reaction 3'-dephospho-CoA + ATP = ADP + CoA + H(+). It functions in the pathway cofactor biosynthesis; coenzyme A biosynthesis; CoA from (R)-pantothenate: step 5/5. In terms of biological role, catalyzes the phosphorylation of the 3'-hydroxyl group of dephosphocoenzyme A to form coenzyme A. This chain is Dephospho-CoA kinase, found in Desulfotalea psychrophila (strain LSv54 / DSM 12343).